Reading from the N-terminus, the 139-residue chain is uncharacterized protein (139 aa).

This is an uncharacterized protein from Aquifex aeolicus (strain VF5).